The primary structure comprises 172 residues: Shikimate kinase (172 aa).

14 to 19 (GAGKST) is a binding site for ATP. Residue S18 coordinates Mg(2+). Positions 36, 60, and 82 each coordinate substrate. ATP is bound at residue R120. Position 140 (R140) interacts with substrate. Q157 serves as a coordination point for ATP.

It belongs to the shikimate kinase family. Monomer. Requires Mg(2+) as cofactor.

The protein resides in the cytoplasm. It catalyses the reaction shikimate + ATP = 3-phosphoshikimate + ADP + H(+). It participates in metabolic intermediate biosynthesis; chorismate biosynthesis; chorismate from D-erythrose 4-phosphate and phosphoenolpyruvate: step 5/7. Catalyzes the specific phosphorylation of the 3-hydroxyl group of shikimic acid using ATP as a cosubstrate. The polypeptide is Shikimate kinase (Colwellia psychrerythraea (strain 34H / ATCC BAA-681) (Vibrio psychroerythus)).